Here is a 60-residue protein sequence, read N- to C-terminus: Large ribosomal subunit protein uL30 (60 aa).

Belongs to the universal ribosomal protein uL30 family. Part of the 50S ribosomal subunit.

The polypeptide is Large ribosomal subunit protein uL30 (Dehalococcoides mccartyi (strain ATCC BAA-2266 / KCTC 15142 / 195) (Dehalococcoides ethenogenes (strain 195))).